Here is a 435-residue protein sequence, read N- to C-terminus: Adenylosuccinate synthetase (435 aa).

GTP contacts are provided by residues 11–17 and 39–41; these read GDEGKGK and GHT. Aspartate 12 (proton acceptor) is an active-site residue. Mg(2+) contacts are provided by aspartate 12 and glycine 39. IMP is bound by residues 12-15, 37-40, threonine 128, arginine 142, glutamine 223, threonine 238, and arginine 302; these read DEGK and NAGH. Histidine 40 (proton donor) is an active-site residue. Position 298–304 (298–304) interacts with substrate; sequence SVTGRPR. Residues arginine 304, 330 to 332, and 412 to 414 each bind GTP; these read KLD and STG.

This sequence belongs to the adenylosuccinate synthetase family. In terms of assembly, homodimer. The cofactor is Mg(2+).

It localises to the cytoplasm. The enzyme catalyses IMP + L-aspartate + GTP = N(6)-(1,2-dicarboxyethyl)-AMP + GDP + phosphate + 2 H(+). Its pathway is purine metabolism; AMP biosynthesis via de novo pathway; AMP from IMP: step 1/2. Functionally, plays an important role in the de novo pathway of purine nucleotide biosynthesis. Catalyzes the first committed step in the biosynthesis of AMP from IMP. The chain is Adenylosuccinate synthetase from Coxiella burnetii (strain RSA 493 / Nine Mile phase I).